The following is a 316-amino-acid chain: Glycerol-3-phosphate dehydrogenase [NAD(P)+] (316 aa).

Ser14, Phe15, Arg35, and Lys109 together coordinate NADPH. Positions 109 and 137 each coordinate sn-glycerol 3-phosphate. Ala141 is an NADPH binding site. Sn-glycerol 3-phosphate-binding residues include Lys192, Asp248, Ser258, Arg259, and Asn260. Lys192 acts as the Proton acceptor in catalysis. Arg259 serves as a coordination point for NADPH. The NADPH site is built by Leu283 and Glu285.

The protein belongs to the NAD-dependent glycerol-3-phosphate dehydrogenase family.

It localises to the cytoplasm. It carries out the reaction sn-glycerol 3-phosphate + NAD(+) = dihydroxyacetone phosphate + NADH + H(+). It catalyses the reaction sn-glycerol 3-phosphate + NADP(+) = dihydroxyacetone phosphate + NADPH + H(+). It functions in the pathway membrane lipid metabolism; glycerophospholipid metabolism. Its function is as follows. Catalyzes the reduction of the glycolytic intermediate dihydroxyacetone phosphate (DHAP) to sn-glycerol 3-phosphate (G3P), the key precursor for phospholipid synthesis. This Rickettsia prowazekii (strain Madrid E) protein is Glycerol-3-phosphate dehydrogenase [NAD(P)+].